Consider the following 219-residue polypeptide: Protein-L-isoaspartate O-methyltransferase (219 aa).

Ser-66 is an active-site residue.

This sequence belongs to the methyltransferase superfamily. L-isoaspartyl/D-aspartyl protein methyltransferase family.

It is found in the cytoplasm. It carries out the reaction [protein]-L-isoaspartate + S-adenosyl-L-methionine = [protein]-L-isoaspartate alpha-methyl ester + S-adenosyl-L-homocysteine. Functionally, catalyzes the methyl esterification of L-isoaspartyl residues in peptides and proteins that result from spontaneous decomposition of normal L-aspartyl and L-asparaginyl residues. It plays a role in the repair and/or degradation of damaged proteins. This chain is Protein-L-isoaspartate O-methyltransferase, found in Xanthobacter autotrophicus (strain ATCC BAA-1158 / Py2).